The chain runs to 290 residues: ADP-dependent (S)-NAD(P)H-hydrate dehydratase (290 aa).

Residues 5-278 (NQTLLEKVII…RYLPKIMKII (274 aa)) form the YjeF C-terminal domain. Positions 40, 103, and 152 each coordinate (6S)-NADPHX. Residue Gly-218 coordinates AMP. Asp-219 serves as a coordination point for (6S)-NADPHX.

The protein belongs to the NnrD/CARKD family. In terms of assembly, homotetramer. Mg(2+) is required as a cofactor.

The enzyme catalyses (6S)-NADHX + ADP = AMP + phosphate + NADH + H(+). The catalysed reaction is (6S)-NADPHX + ADP = AMP + phosphate + NADPH + H(+). Functionally, catalyzes the dehydration of the S-form of NAD(P)HX at the expense of ADP, which is converted to AMP. Together with NAD(P)HX epimerase, which catalyzes the epimerization of the S- and R-forms, the enzyme allows the repair of both epimers of NAD(P)HX, a damaged form of NAD(P)H that is a result of enzymatic or heat-dependent hydration. The polypeptide is ADP-dependent (S)-NAD(P)H-hydrate dehydratase (Streptococcus pneumoniae (strain ATCC BAA-255 / R6)).